Reading from the N-terminus, the 501-residue chain is MNTQSDSAGSQGAAATSRTVSIRTLIALIIGSTVGAGIFSIPQNIGSVAGPGAMLIGWLIAGVGMLSVAFVFHVLARRKPHLDSGVYAYARVGLGDYVGFSSAWGYWLGSVIAQVGYATLFFSTLGHYVPLFSQDHPFVSALAVSALTWLVFGVVSRGISQAAFLTTVTTVAKILPLLCFIILVAFLGFSWEKFTVDLWARDGGVGSIFDQVRGIMVYTVWVFIGIEGASVYSRQARSRSDVSRATVIGFVAVLLLLVSISSLSFGVLTQQELAALPDNSMASVLEAVVGPWGAALISLGLCLSVLGAYVSWQMLCAEPLALMAMDGLIPSKIGAINSRGAAWMAQLISTIVIQIFIIIFFLNETTYVSMVQLATNLYLVPYLFSAFYLVMLATRGKGITHPHAGTRFDDSGPEISRRENRKHLIVGLVATVYSVWLFYAAEPQFVLFGAMAMLPGLIPYVWTRIYRGEQVFNRFEIGVVVVLVVAASAGVIGLVNGSLSL.

Helical transmembrane passes span 25 to 41, 52 to 76, 92 to 113, 138 to 155, 174 to 191, 214 to 232, 247 to 269, 292 to 316, 340 to 362, 377 to 393, 424 to 440, 447 to 463, and 477 to 495; these read LIAL…IFSI, GAML…HVLA, VGLG…SVIA, FVSA…FGVV, ILPL…GFSW, GIMV…ASVY, VIGF…GVLT, WGAA…QMLC, GAAW…IFFL, LYLV…VMLA, LIVG…LFYA, LFGA…YVWT, and IGVV…IGLV.

This sequence belongs to the amino acid-polyamine-organocation (APC) superfamily. Basic amino acid/polyamine antiporter (APA) (TC 2.A.3.2) family.

The protein resides in the cell membrane. Its function is as follows. Permease that is involved in the transport across the membrane of lysine. The polypeptide is L-lysine transport protein (lysI) (Corynebacterium glutamicum (strain ATCC 13032 / DSM 20300 / JCM 1318 / BCRC 11384 / CCUG 27702 / LMG 3730 / NBRC 12168 / NCIMB 10025 / NRRL B-2784 / 534)).